The sequence spans 117 residues: Hydrogenase maturation factor HypA (117 aa).

Histidine 2 provides a ligand contact to Ni(2+). Zn(2+)-binding residues include cysteine 74, cysteine 77, cysteine 91, and cysteine 94.

Belongs to the HypA/HybF family.

Involved in the maturation of [NiFe] hydrogenases. Required for nickel insertion into the metal center of the hydrogenase. The chain is Hydrogenase maturation factor HypA from Helicobacter pylori (strain J99 / ATCC 700824) (Campylobacter pylori J99).